The following is a 349-amino-acid chain: DNA polymerase IV (349 aa).

The UmuC domain maps to 7–188 (IIHIDMDYFF…LPVKKLFGVG (182 aa)). Residues Asp-11 and Asp-106 each coordinate Mg(2+). Residue Glu-107 is part of the active site.

The protein belongs to the DNA polymerase type-Y family. As to quaternary structure, monomer. It depends on Mg(2+) as a cofactor.

The protein localises to the cytoplasm. The enzyme catalyses DNA(n) + a 2'-deoxyribonucleoside 5'-triphosphate = DNA(n+1) + diphosphate. In terms of biological role, poorly processive, error-prone DNA polymerase involved in untargeted mutagenesis. Copies undamaged DNA at stalled replication forks, which arise in vivo from mismatched or misaligned primer ends. These misaligned primers can be extended by PolIV. Exhibits no 3'-5' exonuclease (proofreading) activity. May be involved in translesional synthesis, in conjunction with the beta clamp from PolIII. The sequence is that of DNA polymerase IV from Francisella tularensis subsp. holarctica (strain OSU18).